The sequence spans 424 residues: UDP-N-acetylglucosamine 1-carboxyvinyltransferase (424 aa).

22–23 (KN) serves as a coordination point for phosphoenolpyruvate. UDP-N-acetyl-alpha-D-glucosamine is bound at residue arginine 98. The active-site Proton donor is cysteine 122. Position 122 is a 2-(S-cysteinyl)pyruvic acid O-phosphothioketal (cysteine 122). Residues 127–131 (RPVDQ), aspartate 312, and isoleucine 334 contribute to the UDP-N-acetyl-alpha-D-glucosamine site.

It belongs to the EPSP synthase family. MurA subfamily.

The protein localises to the cytoplasm. The catalysed reaction is phosphoenolpyruvate + UDP-N-acetyl-alpha-D-glucosamine = UDP-N-acetyl-3-O-(1-carboxyvinyl)-alpha-D-glucosamine + phosphate. It functions in the pathway cell wall biogenesis; peptidoglycan biosynthesis. Cell wall formation. Adds enolpyruvyl to UDP-N-acetylglucosamine. The polypeptide is UDP-N-acetylglucosamine 1-carboxyvinyltransferase (Xanthomonas campestris pv. campestris (strain 8004)).